Here is a 488-residue protein sequence, read N- to C-terminus: 3-octaprenyl-4-hydroxybenzoate carboxy-lyase (488 aa).

N172 serves as a coordination point for Mn(2+). Residues 175 to 177 (IYR), 189 to 191 (RWL), and 194 to 195 (RG) each bind prenylated FMN. Residue E238 participates in Mn(2+) binding. D287 acts as the Proton donor in catalysis.

The protein belongs to the UbiD family. As to quaternary structure, homohexamer. The cofactor is prenylated FMN. Mn(2+) is required as a cofactor.

It is found in the cell membrane. It catalyses the reaction a 4-hydroxy-3-(all-trans-polyprenyl)benzoate + H(+) = a 2-(all-trans-polyprenyl)phenol + CO2. The protein operates within cofactor biosynthesis; ubiquinone biosynthesis. Its function is as follows. Catalyzes the decarboxylation of 3-octaprenyl-4-hydroxy benzoate to 2-octaprenylphenol, an intermediate step in ubiquinone biosynthesis. The protein is 3-octaprenyl-4-hydroxybenzoate carboxy-lyase of Halorhodospira halophila (strain DSM 244 / SL1) (Ectothiorhodospira halophila (strain DSM 244 / SL1)).